The following is a 315-amino-acid chain: 10-epi-cubebol synthase (315 aa).

Mg(2+) is bound by residues Asp-79, Asn-220, Ser-224, and Glu-228. A DDXXD motif motif is present at residues 79-83; the sequence is DDVCE. Positions 220 to 228 match the NXXXSXXXE motif motif; the sequence is NDIYSLRKE.

This sequence belongs to the terpene synthase family. Mg(2+) is required as a cofactor.

It catalyses the reaction (2E,6E)-farnesyl diphosphate + H2O = 10-epi-cubebol + diphosphate. Its function is as follows. Catalyzes the cyclization of farnesyl diphosphate (FPP) to 10-epi-cubebol. Is also responsible for the formation of many other sesquiterpenes, mainly cadalanes and cubebanes, including 1,10-di-epi-cubebol and the cadalanes delta-cadinene, T-cadinol and alpha-cadinol. This is 10-epi-cubebol synthase from Sorangium cellulosum (strain So ce56) (Polyangium cellulosum (strain So ce56)).